The sequence spans 359 residues: Cytochrome c oxidase subunit 2 (359 aa).

An N-terminal signal peptide occupies residues 1 to 28 (MEQQNKRGLKRKALLGGVLGSGGLAMAG). A lipid anchor (N-palmitoyl cysteine) is attached at Cys29. Cys29 carries S-diacylglycerol cysteine lipidation. 2 helical membrane passes run 64 to 84 (VWVA…TAIF) and 107 to 127 (VPLE…LFFF). Cu cation-binding residues include His244, Cys285, Glu287, Cys289, His293, and Met296. The interval 338 to 359 (STAPFVSDRTGTRDGENFQTPA) is disordered.

The protein belongs to the cytochrome c oxidase subunit 2 family. As to quaternary structure, associates with subunits I, III and IV to form cytochrome c oxidase. Binuclear copper center (CuA) is required as a cofactor.

It localises to the cell membrane. It catalyses the reaction 4 Fe(II)-[cytochrome c] + O2 + 8 H(+)(in) = 4 Fe(III)-[cytochrome c] + 2 H2O + 4 H(+)(out). Functionally, subunits I and II form the functional core of the enzyme complex. Electrons originating in cytochrome c are transferred via heme a and Cu(A) to the binuclear center formed by heme a3 and Cu(B). In Corynebacterium efficiens (strain DSM 44549 / YS-314 / AJ 12310 / JCM 11189 / NBRC 100395), this protein is Cytochrome c oxidase subunit 2 (ctaC).